A 372-amino-acid chain; its full sequence is Dual-specificity RNA methyltransferase RlmN (372 aa).

Catalysis depends on glutamate 94, which acts as the Proton acceptor. The region spanning 100-339 is the Radical SAM core domain; the sequence is DGDRATLCVS…VTIRKTRGDD (240 aa). Cysteine 107 and cysteine 344 are disulfide-bonded. Residues cysteine 114, cysteine 118, and cysteine 121 each contribute to the [4Fe-4S] cluster site. Residues 168–169, serine 200, 222–224, and asparagine 301 each bind S-adenosyl-L-methionine; these read GE and SLH. Residue cysteine 344 is the S-methylcysteine intermediate of the active site.

It belongs to the radical SAM superfamily. RlmN family. It depends on [4Fe-4S] cluster as a cofactor.

Its subcellular location is the cytoplasm. It carries out the reaction adenosine(2503) in 23S rRNA + 2 reduced [2Fe-2S]-[ferredoxin] + 2 S-adenosyl-L-methionine = 2-methyladenosine(2503) in 23S rRNA + 5'-deoxyadenosine + L-methionine + 2 oxidized [2Fe-2S]-[ferredoxin] + S-adenosyl-L-homocysteine. It catalyses the reaction adenosine(37) in tRNA + 2 reduced [2Fe-2S]-[ferredoxin] + 2 S-adenosyl-L-methionine = 2-methyladenosine(37) in tRNA + 5'-deoxyadenosine + L-methionine + 2 oxidized [2Fe-2S]-[ferredoxin] + S-adenosyl-L-homocysteine. Functionally, specifically methylates position 2 of adenine 2503 in 23S rRNA and position 2 of adenine 37 in tRNAs. m2A2503 modification seems to play a crucial role in the proofreading step occurring at the peptidyl transferase center and thus would serve to optimize ribosomal fidelity. The sequence is that of Dual-specificity RNA methyltransferase RlmN from Aliivibrio fischeri (strain ATCC 700601 / ES114) (Vibrio fischeri).